The following is a 268-amino-acid chain: Hydroxyethylthiazole kinase (268 aa).

A substrate-binding site is contributed by methionine 49. Residues lysine 124 and threonine 168 each contribute to the ATP site. Residue alanine 195 coordinates substrate.

Belongs to the Thz kinase family. Mg(2+) serves as cofactor.

The enzyme catalyses 5-(2-hydroxyethyl)-4-methylthiazole + ATP = 4-methyl-5-(2-phosphooxyethyl)-thiazole + ADP + H(+). Its pathway is cofactor biosynthesis; thiamine diphosphate biosynthesis; 4-methyl-5-(2-phosphoethyl)-thiazole from 5-(2-hydroxyethyl)-4-methylthiazole: step 1/1. In terms of biological role, catalyzes the phosphorylation of the hydroxyl group of 4-methyl-5-beta-hydroxyethylthiazole (THZ). The chain is Hydroxyethylthiazole kinase from Archaeoglobus fulgidus (strain ATCC 49558 / DSM 4304 / JCM 9628 / NBRC 100126 / VC-16).